The sequence spans 182 residues: Ribosome-recycling factor (182 aa).

It belongs to the RRF family.

It is found in the cytoplasm. Responsible for the release of ribosomes from messenger RNA at the termination of protein biosynthesis. May increase the efficiency of translation by recycling ribosomes from one round of translation to another. The protein is Ribosome-recycling factor of Synechococcus sp. (strain JA-2-3B'a(2-13)) (Cyanobacteria bacterium Yellowstone B-Prime).